The primary structure comprises 242 residues: Probable transcriptional regulatory protein NGO_1291 (242 aa).

The protein belongs to the TACO1 family.

It is found in the cytoplasm. This chain is Probable transcriptional regulatory protein NGO_1291, found in Neisseria gonorrhoeae (strain ATCC 700825 / FA 1090).